The sequence spans 317 residues: Putative HTH-type transcriptional regulatory protein Mboo_0195 (317 aa).

Positions Leu132–Ser185 constitute an HTH cro/C1-type domain. A DNA-binding region (H-T-H motif) is located at residues Leu143–Ser162.

The chain is Putative HTH-type transcriptional regulatory protein Mboo_0195 from Methanoregula boonei (strain DSM 21154 / JCM 14090 / 6A8).